We begin with the raw amino-acid sequence, 66 residues long: ARDAYIADDRNCVYTCALNPYCDSECKKNGADGSYCQWLGRFGNACWCKNLPDDVPIRKIPGEECR.

The region spanning 2-66 (RDAYIADDRN…IRKIPGEECR (65 aa)) is the LCN-type CS-alpha/beta domain. 4 disulfide bridges follow: Cys12-Cys65, Cys16-Cys36, Cys22-Cys46, and Cys26-Cys48.

This sequence belongs to the long (4 C-C) scorpion toxin superfamily. Sodium channel inhibitor family. Alpha subfamily. Expressed by the venom gland.

It localises to the secreted. Alpha toxins bind voltage-independently at site-3 of sodium channels (Nav) and inhibit the inactivation of the activated channels, thereby blocking neuronal transmission. Has paralytic activity in mice. In Mesobuthus eupeus (Lesser Asian scorpion), this protein is Toxin BeM14.